Here is a 286-residue protein sequence, read N- to C-terminus: Transcription factor bHLH11 (286 aa).

Residues 1-34 (MDQPMKPKTCSESDFADDSSASSSSSSGQNLRGA) are disordered. The span at 18 to 27 (DSSASSSSSS) shows a compositional bias: low complexity. Residues 44–94 (AVCSQKAEREKLRRDKLKEQFLELGNALDPNRPKSDKASVLTDTIQMLKDV) enclose the bHLH domain. Disordered stretches follow at residues 182–202 (EQQASVQQHSSSSADASMKQD) and 244–286 (QQDV…MLKP). Composition is skewed to low complexity over residues 183 to 198 (QQASVQQHSSSSADAS) and 255 to 269 (SLTTTASSSNSYSLS). The segment covering 270-279 (QAVQDSSPGT) has biased composition (polar residues).

In terms of assembly, homodimer. In terms of tissue distribution, expressed consitutively in roots, leaves, stems, and flowers.

The protein localises to the nucleus. This Arabidopsis thaliana (Mouse-ear cress) protein is Transcription factor bHLH11 (BHLH11).